The sequence spans 301 residues: MSEPFKSGFVAIVGRPNVGKSTLLNHIIGQKIAIMSDKAQTTRNKVQGVFTTDESQIIFIDTPGIHKPKHKLGDFMVKIALNTFQEVDLIYFVIDASTGFGRGDEFIIEKLKNVQTPVFLLINKIDLISPEDLIKLIEQYRELMDFEEIIPISALEGNNVPNLLEQTNANLEIGPMYYPKDQITDHPERFIISELIREQVLQLTREEVPHSVAVVIEGIEKNPKTEKLTINATIIVERSTQKGIIIGKQGQMLKQIGMRARKEIESLLGSKVFLEIWVKVQKNWRDKEHYLHDYGFDREEY.

The region spanning 6 to 173 (KSGFVAIVGR…LEQTNANLEI (168 aa)) is the Era-type G domain. Residues 14–21 (GRPNVGKS) are G1. Position 14-21 (14-21 (GRPNVGKS)) interacts with GTP. A G2 region spans residues 40 to 44 (QTTRN). The G3 stretch occupies residues 61–64 (DTPG). Residues 61-65 (DTPGI) and 123-126 (NKID) contribute to the GTP site. The interval 123–126 (NKID) is G4. Residues 152 to 154 (ISA) form a G5 region. Positions 204 to 282 (TREEVPHSVA…FLEIWVKVQK (79 aa)) constitute a KH type-2 domain.

It belongs to the TRAFAC class TrmE-Era-EngA-EngB-Septin-like GTPase superfamily. Era GTPase family. In terms of assembly, monomer.

It is found in the cytoplasm. It localises to the cell membrane. In terms of biological role, an essential GTPase that binds both GDP and GTP, with rapid nucleotide exchange. Plays a role in 16S rRNA processing and 30S ribosomal subunit biogenesis and possibly also in cell cycle regulation and energy metabolism. This Listeria innocua serovar 6a (strain ATCC BAA-680 / CLIP 11262) protein is GTPase Era.